The primary structure comprises 237 residues: MQLTEQQQDKLSKVQLEESWKRSLTPFLLSPYMDSLRDFLFQQKQAQKTIYPPSKQIFNALNITPLDHVKVVILGQDPYHGPNQANGLSFSVQRGVALPPSLRNIFHELHTDLGVPISRHGDLTKWAEQGVLLLNSVLTVEAGQPTSHQKQGWEEFTDAVIDVLNEQREHIVFILWGAYAQRKGQRINREKHLVLTAAHPSPLAANRGGFFGCKVFSKTNQYLKQHGIEPIDWQLDA.

Residue aspartate 77 is the Proton acceptor of the active site.

It belongs to the uracil-DNA glycosylase (UDG) superfamily. UNG family.

It is found in the cytoplasm. It catalyses the reaction Hydrolyzes single-stranded DNA or mismatched double-stranded DNA and polynucleotides, releasing free uracil.. Its function is as follows. Excises uracil residues from the DNA which can arise as a result of misincorporation of dUMP residues by DNA polymerase or due to deamination of cytosine. The polypeptide is Uracil-DNA glycosylase (Acinetobacter baumannii (strain AB307-0294)).